The chain runs to 330 residues: Ketol-acid reductoisomerase (NADP(+)) (330 aa).

Positions 1–181 (MKVFYDSDFK…GLSRAGVIQT (181 aa)) constitute a KARI N-terminal Rossmann domain. Residues 24 to 27 (YGSQ), Arg47, Ser52, and 82 to 85 (DELQ) contribute to the NADP(+) site. His107 is an active-site residue. An NADP(+)-binding site is contributed by Gly133. One can recognise a KARI C-terminal knotted domain in the interval 182 to 327 (TFKEETETDL…AKLRKMCGLE (146 aa)). 4 residues coordinate Mg(2+): Asp190, Glu194, Glu226, and Glu230. Ser251 contacts substrate.

This sequence belongs to the ketol-acid reductoisomerase family. The cofactor is Mg(2+).

The catalysed reaction is (2R)-2,3-dihydroxy-3-methylbutanoate + NADP(+) = (2S)-2-acetolactate + NADPH + H(+). It catalyses the reaction (2R,3R)-2,3-dihydroxy-3-methylpentanoate + NADP(+) = (S)-2-ethyl-2-hydroxy-3-oxobutanoate + NADPH + H(+). It participates in amino-acid biosynthesis; L-isoleucine biosynthesis; L-isoleucine from 2-oxobutanoate: step 2/4. The protein operates within amino-acid biosynthesis; L-valine biosynthesis; L-valine from pyruvate: step 2/4. Functionally, involved in the biosynthesis of branched-chain amino acids (BCAA). Catalyzes an alkyl-migration followed by a ketol-acid reduction of (S)-2-acetolactate (S2AL) to yield (R)-2,3-dihydroxy-isovalerate. In the isomerase reaction, S2AL is rearranged via a Mg-dependent methyl migration to produce 3-hydroxy-3-methyl-2-ketobutyrate (HMKB). In the reductase reaction, this 2-ketoacid undergoes a metal-dependent reduction by NADPH to yield (R)-2,3-dihydroxy-isovalerate. The chain is Ketol-acid reductoisomerase (NADP(+)) from Methanococcus maripaludis (strain C7 / ATCC BAA-1331).